We begin with the raw amino-acid sequence, 558 residues long: Serine palmitoyltransferase 1 (558 aa).

Topologically, residues 1 to 49 (MAHIPEVLPKSIPIPAFIVTTSSYLWYYFNLVLTQIPGGQFIVSYIKKS) are lumenal. Residues 50-84 (HHDDPYRTTVEIGLILYGIIYYLSKPQQKKSLQAQ) traverse the membrane as a helical segment. Topologically, residues 85-341 (KPNLSPQEID…GRGLSEHFNM (257 aa)) are cytoplasmic. T121 carries the post-translational modification Phosphothreonine. The chain crosses the membrane as a helical span at residues 342 to 371 (DRATAIDITVGSMATALGSTGGFVLGDSVM). At 372–424 (CLHQRIGSNAYCFSACLPAYTVTSVSKVLKLMDSNNDAVQTLQKLSKSLHDSF) the chain is on the lumenal side. A helical membrane pass occupies residues 425 to 457 (ASDDSLRSYVIVTSSPVSAVLHLQLTPAYRSRK). At 458 to 558 (FGYTCEQLFE…ILACCQESNK (101 aa)) the chain is on the cytoplasmic side.

It belongs to the class-II pyridoxal-phosphate-dependent aminotransferase family. In terms of assembly, LCB1 and LCB2 encode essential subunits of the enzyme and form a heterodimer. Component of the SPOTS complex, at least composed of LCB1/2 (LCB1 and/or LCB2), ORM1/2 (ORM1 and/or ORM2), SAC1 and TSC3. Interacts with LCB2 and TSC3. Pyridoxal 5'-phosphate is required as a cofactor.

It localises to the cytoplasm. Its subcellular location is the endoplasmic reticulum membrane. It carries out the reaction L-serine + hexadecanoyl-CoA + H(+) = 3-oxosphinganine + CO2 + CoA. It participates in lipid metabolism; sphingolipid metabolism. In terms of biological role, component of serine palmitoyltransferase (SPT), which catalyzes the committed step in the synthesis of sphingolipids, the condensation of serine with palmitoyl CoA to form the long chain base 3-ketosphinganine. This Saccharomyces cerevisiae (strain ATCC 204508 / S288c) (Baker's yeast) protein is Serine palmitoyltransferase 1 (LCB1).